The primary structure comprises 366 residues: Pectinesterase A (366 aa).

Residues 1–24 (MLKTISGTLALSLIIAASVHQAQA) form the signal peptide. Residues T109 and Q153 each coordinate substrate. D178 (proton donor) is an active-site residue. A disulfide bridge connects residues C192 and C212. D199 functions as the Nucleophile in the catalytic mechanism. Substrate-binding residues include R219, N226, Y230, R267, W269, and T272.

This sequence belongs to the pectinesterase family. Monomer.

Its subcellular location is the secreted. It carries out the reaction [(1-&gt;4)-alpha-D-galacturonosyl methyl ester](n) + n H2O = [(1-&gt;4)-alpha-D-galacturonosyl](n) + n methanol + n H(+). The protein operates within glycan metabolism; pectin degradation; 2-dehydro-3-deoxy-D-gluconate from pectin: step 1/5. Functionally, involved in maceration and soft-rotting of plant tissue. This chain is Pectinesterase A (pemA), found in Dickeya chrysanthemi (Pectobacterium chrysanthemi).